The primary structure comprises 680 residues: MKLATEKKTTRQKLSIAGMLITMGVVYGDIGTSPLYVMKSIVEGNGGIRNISQDFVVGSISLVFWTLMLMTTVKYVLIALRADNNGEGGIFALYTLIRKQAKWLVIPAIIGGATLLADGMLTPAVTVTTAIEGLKGLPINGNVLVSNQREVIILTVTILSVLFFIQKFGTDLIGKSFGPIMLIWFTFIGAIGVMNLMGDLTMLKALNPYYAIHLLFSPENKVGILILGSVFLATTGAEALYSDMGHVGRHNIYGSWPYIAACLVLNYFGQGVWLLQHKEVAAYQNMTDFNPFFEAMPAQLKIPAILLATVAAIIASQALISGSYTLVSEAIKLRLLPRIKVDYPAKLKGQLYISIVNWILWAVCLAVVFYFKNSAHMEAAYGLAITITMLMTTILLFHYLGRREKRWFLAYVVLLFFGAIETIFFIASAAKFMHGGYVTVLIAFVILFIMFVWYRSNSIKESNTFKSSTVSLLAYKRQLHDLRNETSLPLYTTNLVYLSKPQAEPRGKNMVKKNILYSILDKRPKRAQVYWFVAVNVTDEPYTAEYTVDTLGTDYIVSVQLYLGFKMEQKVNIFIRQIIHEMIHNGELPAQPQHYTTIPNREVGDFSFVIIQEDLSPETQIRAMDKVIVQIRLWLEKFTDTPASWFGLEYSDVFVERIPLVLGRQKAINKYHLKRRQEES.

Helical transmembrane passes span 16 to 36 (IAGMLITMGVVYGDIGTSPLY), 60 to 80 (ISLVFWTLMLMTTVKYVLIAL), 103 to 123 (WLVIPAIIGGATLLADGMLTP), 150 to 170 (EVIILTVTILSVLFFIQKFGT), 177 to 197 (FGPIMLIWFTFIGAIGVMNLM), 222 to 242 (VGILILGSVFLATTGAEALYS), 255 to 275 (SWPYIAACLVLNYFGQGVWLL), 302 to 322 (IPAILLATVAAIIASQALISG), 351 to 371 (LYISIVNWILWAVCLAVVFYF), 380 to 400 (AYGLAITITMLMTTILLFHYL), 407 to 427 (WFLAYVVLLFFGAIETIFFIA), and 432 to 452 (FMHGGYVTVLIAFVILFIMFV).

The protein belongs to the HAK/KUP transporter (TC 2.A.72) family.

The protein localises to the cell membrane. It carries out the reaction K(+)(in) + H(+)(in) = K(+)(out) + H(+)(out). Functionally, transport of potassium into the cell. Likely operates as a K(+):H(+) symporter. This Latilactobacillus sakei subsp. sakei (strain 23K) (Lactobacillus sakei subsp. sakei) protein is Probable potassium transport system protein Kup.